A 359-amino-acid polypeptide reads, in one-letter code: Guanine nucleotide-binding protein G(q) subunit alpha (359 aa).

Residues C9 and C10 are each lipidated (S-palmitoyl cysteine). Positions 38-359 constitute a G-alpha domain; sequence RELKLLLLGT…QLNLKEYNLV (322 aa). The segment at 41–54 is G1 motif; sequence KLLLLGTGESGKST. The GTP site is built by S50, G51, K52, S53, T54, S156, L180, R181, and R183. A Mg(2+)-binding site is contributed by S53. A G2 motif region spans residues 178–186; sequence DVLRVRVPT. T186 contributes to the Mg(2+) binding site. A G3 motif region spans residues 201–210; sequence FRMVDVGGQR. Q209 is subject to 5-glutamyl histamine. The interval 270–277 is G4 motif; the sequence is ILFLNKKD. GTP is bound by residues N274, K275, D277, and A331. The tract at residues 329-334 is G5 motif; it reads TCATDT.

The protein belongs to the G-alpha family. G(q) subfamily. In terms of assembly, g proteins are composed of 3 units; alpha, beta and gamma. The alpha chain contains the guanine nucleotide binding site. Interacts (GDP-bound form) with RIC8A (via C-terminus); promoting GNAQ folding and association with the plasma membrane. Binds NHERF1. Forms a complex with PECAM1 and BDKRB2. Interacts with GAS2L2. Post-translationally, palmitoylated by ZDHHC3 and ZDHHC7. Palmitoylation occurs in the Golgi and participates in the localization of GNAQ to the plasma membrane. In terms of processing, histaminylated at Gln-209 residues by TGM2.

It localises to the cell membrane. It is found in the golgi apparatus. The protein localises to the nucleus. Its subcellular location is the nucleus membrane. It catalyses the reaction GTP + H2O = GDP + phosphate + H(+). Its function is as follows. Guanine nucleotide-binding proteins (G proteins) function as transducers downstream of G protein-coupled receptors (GPCRs) in numerous signaling cascades. The alpha chain contains the guanine nucleotide binding site and alternates between an active, GTP-bound state and an inactive, GDP-bound state. Signaling by an activated GPCR promotes GDP release and GTP binding. The alpha subunit has a low GTPase activity that converts bound GTP to GDP, thereby terminating the signal. Both GDP release and GTP hydrolysis are modulated by numerous regulatory proteins. Signaling is mediated via phospholipase C-beta-dependent inositol lipid hydrolysis for signal propagation: activates phospholipase C-beta: following GPCR activation, GNAQ activates PLC-beta (PLCB1, PLCB2, PLCB3 or PLCB4), leading to production of diacylglycerol (DAG) and inositol 1,4,5-trisphosphate (IP3). Required for platelet activation. Regulates B-cell selection and survival and is required to prevent B-cell-dependent autoimmunity. Regulates chemotaxis of BM-derived neutrophils and dendritic cells (in vitro). Transduces FFAR4 signaling in response to long-chain fatty acids (LCFAs). Together with GNA11, required for heart development. The chain is Guanine nucleotide-binding protein G(q) subunit alpha (GNAQ) from Canis lupus familiaris (Dog).